Consider the following 491-residue polypeptide: MVRRLRGDCMEEVERAKAVLKENNVRQVLCAFADVRGYLQMFSIPAREFVDGSAFENGIGFDGSSVRGFRTIEKSDMVWMPDASSLKIIPWIDDPIQKSAIMFGNVYEAWGTEIADCDPRGYVAKRYEDMLKSEGMSAIFGPEIEFFLFEGVDFTRLSWDMWVSPNGGAGDSWGPPRIMPISSELESGYMIRPKEGYFRPPPEDTTVEYRNELVYYLEQLGIDIEYHHHEVATAGQVELDFKPKQLVDVGDAFYLYKFAAKNIAAMHGLYATFMPKPLYLDNASGMHTHQSLWKGEPFSGEAVFADPDDEYMLSQKARYYIGGLLEHAKALTALCAPTVNSYKRLVPGFEAPIYICWSPRNRSALVRVPMYVKKPSAIRVEYRGVDPSCNPYLAITAQLAAGLDGIKKKIDPGDPLLEDVYELTPAQKRELGVGELPTTLRDAIDHLASDELMQEVLGSHIFDAFMELKIDEWNQYCLYITPWEFMKYFDI.

The GS beta-grasp domain occupies 23–111; sequence NNVRQVLCAF…MFGNVYEAWG (89 aa). The GS catalytic domain occupies 119-491; it reads PRGYVAKRYE…PWEFMKYFDI (373 aa). Residues Glu143 and Glu145 each coordinate Mg(2+). Residue Glu225 coordinates ATP. Mg(2+)-binding residues include Glu230 and Glu238. L-glutamate contacts are provided by residues 282-283 and Ala283; that span reads NA. His287 contributes to the Mg(2+) binding site. Residues 289-291 and Ser291 contribute to the ATP site; that span reads HQS. The L-glutamate site is built by Arg344, Glu350, and Arg362. 2 residues coordinate ATP: Arg362 and Arg367. Glu381 provides a ligand contact to Mg(2+). Arg383 contacts L-glutamate.

This sequence belongs to the glutamine synthetase family. Oligomer of 12 subunits arranged in the form of two hexagons. Mg(2+) serves as cofactor.

Its subcellular location is the cytoplasm. The enzyme catalyses L-glutamate + NH4(+) + ATP = L-glutamine + ADP + phosphate + H(+). Probably involved in nitrogen metabolism via ammonium assimilation. Catalyzes the ATP-dependent biosynthesis of glutamine from glutamate and ammonia. Beta-glutamate is a much poorer substrate than alpha-glutamate. This Archaeoglobus fulgidus (strain ATCC 49558 / DSM 4304 / JCM 9628 / NBRC 100126 / VC-16) protein is Glutamine synthetase.